The following is a 124-amino-acid chain: Small ribosomal subunit protein uS12 (124 aa).

D90 carries the 3-methylthioaspartic acid modification.

It belongs to the universal ribosomal protein uS12 family. Part of the 30S ribosomal subunit. Contacts proteins S8 and S17. May interact with IF1 in the 30S initiation complex.

With S4 and S5 plays an important role in translational accuracy. Functionally, interacts with and stabilizes bases of the 16S rRNA that are involved in tRNA selection in the A site and with the mRNA backbone. Located at the interface of the 30S and 50S subunits, it traverses the body of the 30S subunit contacting proteins on the other side and probably holding the rRNA structure together. The combined cluster of proteins S8, S12 and S17 appears to hold together the shoulder and platform of the 30S subunit. The polypeptide is Small ribosomal subunit protein uS12 (Wolbachia pipientis wMel).